The following is a 280-amino-acid chain: Shikimate dehydrogenase (NADP(+)) (280 aa).

Shikimate-binding positions include 20-22 (SLS) and T67. The active-site Proton acceptor is the K71. Residues N92 and D107 each coordinate shikimate. NADP(+)-binding positions include 131 to 135 (GAGGA) and G220. Y222 lines the shikimate pocket. G243 lines the NADP(+) pocket.

Belongs to the shikimate dehydrogenase family. In terms of assembly, homodimer.

It catalyses the reaction shikimate + NADP(+) = 3-dehydroshikimate + NADPH + H(+). Its pathway is metabolic intermediate biosynthesis; chorismate biosynthesis; chorismate from D-erythrose 4-phosphate and phosphoenolpyruvate: step 4/7. Functionally, involved in the biosynthesis of the chorismate, which leads to the biosynthesis of aromatic amino acids. Catalyzes the reversible NADPH linked reduction of 3-dehydroshikimate (DHSA) to yield shikimate (SA). The polypeptide is Shikimate dehydrogenase (NADP(+)) (Maricaulis maris (strain MCS10) (Caulobacter maris)).